The primary structure comprises 871 residues: Alanine--tRNA ligase (871 aa).

The Zn(2+) site is built by His563, His567, Cys665, and His669.

Belongs to the class-II aminoacyl-tRNA synthetase family. Zn(2+) serves as cofactor.

Its subcellular location is the cytoplasm. The enzyme catalyses tRNA(Ala) + L-alanine + ATP = L-alanyl-tRNA(Ala) + AMP + diphosphate. Catalyzes the attachment of alanine to tRNA(Ala) in a two-step reaction: alanine is first activated by ATP to form Ala-AMP and then transferred to the acceptor end of tRNA(Ala). Also edits incorrectly charged Ser-tRNA(Ala) and Gly-tRNA(Ala) via its editing domain. The polypeptide is Alanine--tRNA ligase (Christiangramia forsetii (strain DSM 17595 / CGMCC 1.15422 / KT0803) (Gramella forsetii)).